The following is a 255-amino-acid chain: Hydroxyethylthiazole kinase (255 aa).

Residue methionine 38 coordinates substrate. The ATP site is built by arginine 114 and threonine 160. Glycine 187 provides a ligand contact to substrate.

This sequence belongs to the Thz kinase family. The cofactor is Mg(2+).

The catalysed reaction is 5-(2-hydroxyethyl)-4-methylthiazole + ATP = 4-methyl-5-(2-phosphooxyethyl)-thiazole + ADP + H(+). It participates in cofactor biosynthesis; thiamine diphosphate biosynthesis; 4-methyl-5-(2-phosphoethyl)-thiazole from 5-(2-hydroxyethyl)-4-methylthiazole: step 1/1. Functionally, catalyzes the phosphorylation of the hydroxyl group of 4-methyl-5-beta-hydroxyethylthiazole (THZ). The protein is Hydroxyethylthiazole kinase of Lysinibacillus sphaericus (strain C3-41).